The primary structure comprises 699 residues: Elongation factor G (699 aa).

Residues 8–288 (EDYRNFGIMA…AVVDYLPSPV (281 aa)) form the tr-type G domain. GTP is bound by residues 17–24 (AHIDAGKT), 86–90 (DTPGH), and 140–143 (NKMD).

This sequence belongs to the TRAFAC class translation factor GTPase superfamily. Classic translation factor GTPase family. EF-G/EF-2 subfamily.

Its subcellular location is the cytoplasm. In terms of biological role, catalyzes the GTP-dependent ribosomal translocation step during translation elongation. During this step, the ribosome changes from the pre-translocational (PRE) to the post-translocational (POST) state as the newly formed A-site-bound peptidyl-tRNA and P-site-bound deacylated tRNA move to the P and E sites, respectively. Catalyzes the coordinated movement of the two tRNA molecules, the mRNA and conformational changes in the ribosome. In Sinorhizobium medicae (strain WSM419) (Ensifer medicae), this protein is Elongation factor G.